Here is a 248-residue protein sequence, read N- to C-terminus: DnaA regulatory inactivator Hda (248 aa).

It belongs to the DnaA family. HdA subfamily. The active form seems to be an ADP-bound monomer. Forms the RIDA complex (regulatory inactivation of DnaA) of ATP-DnaA, ADP-Hda and the DNA-loaded beta sliding clamp (dnaN).

In terms of biological role, mediates the interaction of DNA replication initiator protein DnaA with DNA polymerase subunit beta sliding clamp (dnaN). Stimulates hydrolysis of ATP-DnaA to ADP-DnaA, rendering DnaA inactive for reinitiation, a process called regulatory inhibition of DnaA or RIDA. The sequence is that of DnaA regulatory inactivator Hda from Proteus mirabilis (strain HI4320).